A 482-amino-acid chain; its full sequence is tRNA sulfurtransferase (482 aa).

The region spanning 61-165 (PAIRDALTRI…NDRLLLVKGR (105 aa)) is the THUMP domain. ATP is bound by residues 183–184 (LI), Lys-265, Gly-287, and Gln-296. Cys-344 and Cys-456 are joined by a disulfide. A Rhodanese domain is found at 404 to 482 (FGANDAILDI…GFSNVKVYRP (79 aa)). Catalysis depends on Cys-456, which acts as the Cysteine persulfide intermediate.

It belongs to the ThiI family.

The protein localises to the cytoplasm. The catalysed reaction is [ThiI sulfur-carrier protein]-S-sulfanyl-L-cysteine + a uridine in tRNA + 2 reduced [2Fe-2S]-[ferredoxin] + ATP + H(+) = [ThiI sulfur-carrier protein]-L-cysteine + a 4-thiouridine in tRNA + 2 oxidized [2Fe-2S]-[ferredoxin] + AMP + diphosphate. It catalyses the reaction [ThiS sulfur-carrier protein]-C-terminal Gly-Gly-AMP + S-sulfanyl-L-cysteinyl-[cysteine desulfurase] + AH2 = [ThiS sulfur-carrier protein]-C-terminal-Gly-aminoethanethioate + L-cysteinyl-[cysteine desulfurase] + A + AMP + 2 H(+). The protein operates within cofactor biosynthesis; thiamine diphosphate biosynthesis. In terms of biological role, catalyzes the ATP-dependent transfer of a sulfur to tRNA to produce 4-thiouridine in position 8 of tRNAs, which functions as a near-UV photosensor. Also catalyzes the transfer of sulfur to the sulfur carrier protein ThiS, forming ThiS-thiocarboxylate. This is a step in the synthesis of thiazole, in the thiamine biosynthesis pathway. The sulfur is donated as persulfide by IscS. The protein is tRNA sulfurtransferase of Klebsiella pneumoniae (strain 342).